The primary structure comprises 204 residues: Thiamine-phosphate synthase (204 aa).

4-amino-2-methyl-5-(diphosphooxymethyl)pyrimidine contacts are provided by residues 32-36 (QLRMK) and D64. Mg(2+) contacts are provided by D65 and D84. T103 contacts 4-amino-2-methyl-5-(diphosphooxymethyl)pyrimidine. 129–131 (TTT) contacts 2-[(2R,5Z)-2-carboxy-4-methylthiazol-5(2H)-ylidene]ethyl phosphate. K132 contacts 4-amino-2-methyl-5-(diphosphooxymethyl)pyrimidine. G165 serves as a coordination point for 2-[(2R,5Z)-2-carboxy-4-methylthiazol-5(2H)-ylidene]ethyl phosphate.

The protein belongs to the thiamine-phosphate synthase family. Mg(2+) is required as a cofactor.

The enzyme catalyses 2-[(2R,5Z)-2-carboxy-4-methylthiazol-5(2H)-ylidene]ethyl phosphate + 4-amino-2-methyl-5-(diphosphooxymethyl)pyrimidine + 2 H(+) = thiamine phosphate + CO2 + diphosphate. It catalyses the reaction 2-(2-carboxy-4-methylthiazol-5-yl)ethyl phosphate + 4-amino-2-methyl-5-(diphosphooxymethyl)pyrimidine + 2 H(+) = thiamine phosphate + CO2 + diphosphate. It carries out the reaction 4-methyl-5-(2-phosphooxyethyl)-thiazole + 4-amino-2-methyl-5-(diphosphooxymethyl)pyrimidine + H(+) = thiamine phosphate + diphosphate. It functions in the pathway cofactor biosynthesis; thiamine diphosphate biosynthesis; thiamine phosphate from 4-amino-2-methyl-5-diphosphomethylpyrimidine and 4-methyl-5-(2-phosphoethyl)-thiazole: step 1/1. In terms of biological role, condenses 4-methyl-5-(beta-hydroxyethyl)thiazole monophosphate (THZ-P) and 2-methyl-4-amino-5-hydroxymethyl pyrimidine pyrophosphate (HMP-PP) to form thiamine monophosphate (TMP). The protein is Thiamine-phosphate synthase of Bacteroides fragilis (strain ATCC 25285 / DSM 2151 / CCUG 4856 / JCM 11019 / LMG 10263 / NCTC 9343 / Onslow / VPI 2553 / EN-2).